We begin with the raw amino-acid sequence, 904 residues long: Envelope glycoprotein B (904 aa).

Positions 1 to 22 (MRGGGLICALVVGALVAAVASA) are cleaved as a signal peptide. Over 23–771 (APAAPAAPRA…SGVSSFMSNP (749 aa)) the chain is Virion surface. The interval 40–83 (VAANGGPASRPPPVPSPATTKARKRKTKKPPKRPEATPPPDANA) is disordered. Residues 60–70 (KARKRKTKKPP) show a composition bias toward basic residues. Residues N82 and N136 are each glycosylated (N-linked (GlcNAc...) asparagine; by host). Intrachain disulfides connect C111-C570, C128-C526, C202-C266, C359-C407, and C593-C630. Involved in fusion and/or binding to host membrane regions lie at residues 168–174 (VWFGHRY) and 253–260 (RVEAFHRY). N393, N425, and N486 each carry an N-linked (GlcNAc...) asparagine; by host glycan. A disordered region spans residues 467–490 (QDRKPRNATPAPLREAPSANASVE). N671 is a glycosylation site (N-linked (GlcNAc...) asparagine; by host). 2 hydrophobic membrane proximal region regions span residues 716–769 (IDTV…SFMS) and 728–768 (MFAG…SSFM). A helical transmembrane segment spans residues 772 to 792 (FGALAVGLLVLAGLVAAFFAF). Residues 793–904 (RYVLQLQRNP…EDEAGDEDEL (112 aa)) are Intravirion-facing. A disordered region spans residues 816 to 835 (TSDPGGVGGEGEEGAEGGGF). Positions 849-852 (YMAL) match the Golgi targeting motif. The disordered stretch occupies residues 883–904 (KRNKARYSPLHNEDEAGDEDEL). Positions 889 to 892 (YSPL) match the Internalization motif motif.

It belongs to the herpesviridae glycoprotein B family. As to quaternary structure, homotrimer; disulfide-linked. Binds to heparan sulfate proteoglycans. Interacts with gH/gL heterodimer.

Its subcellular location is the virion membrane. It is found in the host cell membrane. The protein localises to the host endosome membrane. The protein resides in the host Golgi apparatus membrane. In terms of biological role, envelope glycoprotein that forms spikes at the surface of virion envelope. Essential for the initial attachment to heparan sulfate moieties of the host cell surface proteoglycans. Involved in fusion of viral and cellular membranes leading to virus entry into the host cell. Following initial binding to its host receptors, membrane fusion is mediated by the fusion machinery composed at least of gB and the heterodimer gH/gL. May be involved in the fusion between the virion envelope and the outer nuclear membrane during virion egress. This is Envelope glycoprotein B from Homo sapiens (Human).